The following is a 208-amino-acid chain: Dephospho-CoA kinase (208 aa).

Residues 5–201 (IVALTGGIGS…QRYLALAASA (197 aa)) enclose the DPCK domain. 13–18 (GSGKST) contacts ATP.

The protein belongs to the CoaE family.

The protein resides in the cytoplasm. The enzyme catalyses 3'-dephospho-CoA + ATP = ADP + CoA + H(+). It functions in the pathway cofactor biosynthesis; coenzyme A biosynthesis; CoA from (R)-pantothenate: step 5/5. Its function is as follows. Catalyzes the phosphorylation of the 3'-hydroxyl group of dephosphocoenzyme A to form coenzyme A. The chain is Dephospho-CoA kinase from Sodalis glossinidius (strain morsitans).